A 1320-amino-acid polypeptide reads, in one-letter code: Sal-like protein 3 (1320 aa).

The segment covering 1 to 11 has biased composition (basic residues); that stretch reads MSRRKQAKPQH. The segment at 1 to 49 is disordered; that stretch reads MSRRKQAKPQHLKSDEELPPQDGASEHGVPGDGAEDADSGSESRSGSEE. A compositionally biased stretch (low complexity) spans 40-49; sequence GSESRSGSEE. The C2H2-type 1; atypical zinc finger occupies 51–73; that stretch reads SVCEKCCAEFFKWADFLQHKKTC. 2 disordered regions span residues 84 to 166 and 271 to 367; these read DDEP…AFSM and LSAG…NLPN. Residues 88 to 100 show a composition bias toward pro residues; sequence APPSEDFPEPSPA. At Ser-109 the chain carries Phosphoserine. Over residues 121–131 the composition is skewed to basic and acidic residues; the sequence is SEVKAATKEAE. Pro residues predominate over residues 143–160; sequence PPGPSVPPPPPALPPQPE. Residues 271 to 289 show a composition bias toward low complexity; sequence LSAGPATASAGSGSTLPAA. The span at 295–311 shows a compositional bias: polar residues; that stretch reads HLSQPASGTSTPCSTSA. 2 stretches are compositionally biased toward low complexity: residues 323-342 and 355-367; these read STGPAPGAVAAASSTVGNAV and PGPLLSSASNLPN. 2 consecutive C2H2-type zinc fingers follow at residues 427 to 449 and 455 to 477; these read HKCRFCAKVFGSDSALQIHLRSH and FKCNICGNRFSTKGNLKVHFQRH. A disordered region spans residues 534–623; it reads GLQLPPTVPG…RTGDAPVVGG (90 aa). Positions 543–554 are enriched in polar residues; it reads GTHNYTDSPSIT. Low complexity predominate over residues 555 to 568; sequence PVSRSPQRPSPASS. Residues 569–583 are compositionally biased toward polar residues; the sequence is ECTSLSPGLNNTESG. C2H2-type zinc fingers lie at residues 692-714, 720-742, and 752-774; these read NQCVICHRVLSCQSALKMHYRTH, FKCKICGRAFTTKGNLKTHFGVH, and HSCPICQKKFTNAVVLQQHIRMH. 2 disordered regions span residues 807–846 and 878–972; these read SSFDDDIDENSMEEDSELKDTASDSSKPLLSYSGSCPPSP and VENG…GHPG. Over residues 809-823 the composition is skewed to acidic residues; it reads FDDDIDENSMEEDSE. Low complexity-rich tracts occupy residues 834 to 846 and 902 to 923; these read PLLSYSGSCPPSP and RSAGSPALSESSSSQALSPAHS. At Ser-932 the chain carries Phosphoserine. C2H2-type zinc fingers lie at residues 997 to 1019, 1025 to 1047, 1133 to 1155, and 1161 to 1183; these read TVCGVCGKPFACKSALEIHYRSH, FVCTVCRRGCSTMGNLKQHLLTH, HNCQSCGKTFSSASALQIHERTH, and FGCTICGRAFTTKGNLKVHMGTH. Ser-1197 is modified (phosphoserine).

It belongs to the sal C2H2-type zinc-finger protein family. In terms of tissue distribution, in adult brain, testis and kidney. In lower levels also in adult ovaries and embryonic stem cells. In embryo in developing neuroectoderm of brain, inner ear and spinal cord. Also weakly and transiently expressed in embryonic branchial arches, notochord, limb buds and heart.

It localises to the nucleus. Probable transcription factor. The chain is Sal-like protein 3 (Sall3) from Mus musculus (Mouse).